Reading from the N-terminus, the 425-residue chain is Testicular acid phosphatase (425 aa).

An N-terminal signal peptide occupies residues 1 to 27; that stretch reads MAEPGSQGHTVGPLLLLLLLLLPRALP. Residues 28 to 392 lie on the Extracellular side of the membrane; sequence EGPLLFVALV…EPASPPATVP (365 aa). His-40 functions as the Nucleophile in the catalytic mechanism. 3 cysteine pairs are disulfide-bonded: Cys-158–Cys-378, Cys-213–Cys-311, and Cys-353–Cys-357. Asp-288 functions as the Proton donor in the catalytic mechanism. A helical membrane pass occupies residues 393 to 413; it reads LLAGAVAVLAVLSLGLGLLAW. At 414–425 the chain is on the cytoplasmic side; the sequence is RPRCLRALGGTV.

Belongs to the histidine acid phosphatase family. Homodimer. Glycosylated.

The protein localises to the membrane. The catalysed reaction is a phosphate monoester + H2O = an alcohol + phosphate. Functionally, may dephosphorylate receptor tyrosine-protein kinase ERBB4 and inhibits its ligand-induced proteolytic cleavage. May play a role in odontogenesis. The polypeptide is Testicular acid phosphatase (Mus musculus (Mouse)).